The following is a 467-amino-acid chain: Glycogen synthase (467 aa).

An ADP-alpha-D-glucose-binding site is contributed by K15.

The protein belongs to the glycosyltransferase 1 family. Bacterial/plant glycogen synthase subfamily.

It carries out the reaction [(1-&gt;4)-alpha-D-glucosyl](n) + ADP-alpha-D-glucose = [(1-&gt;4)-alpha-D-glucosyl](n+1) + ADP + H(+). Its pathway is glycan biosynthesis; glycogen biosynthesis. Synthesizes alpha-1,4-glucan chains using ADP-glucose. This Desulfitobacterium hafniense (strain DSM 10664 / DCB-2) protein is Glycogen synthase.